Here is a 1249-residue protein sequence, read N- to C-terminus: MAGE-like protein 2 (1249 aa).

Residues 1-10 (MSQLSKNLGD) show a composition bias toward polar residues. Disordered stretches follow at residues 1 to 50 (MSQL…PPID), 134 to 233 (APGA…AQPP), 300 to 327 (QPPA…QPMA), 349 to 378 (PQVP…WQAT), 410 to 433 (RQGP…VRQA), 515 to 569 (QALP…LPAP), 647 to 679 (QPFQ…EVPT), 714 to 746 (LMTP…RAPS), 862 to 910 (PQAT…DWQG), and 930 to 957 (VSGD…ILSG). 2 stretches are compositionally biased toward pro residues: residues 40–49 (PPVPWDPPPI) and 140–233 (AHPP…AQPP). Residues 301 to 311 (PPASGAPMAQP) show a composition bias toward low complexity. Pro residues-rich tracts occupy residues 312–324 (AAPP…PPAQ) and 349–358 (PQVPQGPQAP). The span at 369–378 (QATSPGWQAT) shows a compositional bias: polar residues. Residues 410–432 (RQGPPPIRPGPPPIRPGPPPVRQ) are compositionally biased toward pro residues. Over residues 525-552 (QAPQARLPAPQVQAAPQVPTAPPATQVP) the composition is skewed to low complexity. A compositionally biased stretch (pro residues) spans 553-567 (AAPPAGPQVPQPVLP). Over residues 662-675 (QLPPQQAQASGPQA) the composition is skewed to low complexity. Residues 725–746 (SIDRRGSSKERRTSSKERRAPS) are compositionally biased toward basic and acidic residues. The segment covering 862 to 871 (PQATATTQEA) has biased composition (low complexity). The segment covering 881–891 (RSGKATRKKKH) has biased composition (basic residues). An MAGE domain is found at 1020–1219 (LDERANALVQ…QSWPFHYLEA (200 aa)). A compositionally biased stretch (acidic residues) spans 1226 to 1235 (EDTDEDEPDT). The segment at 1226-1249 (EDTDEDEPDTGDSAHGPTSRPPPR) is disordered.

In terms of assembly, part of a complex consisting of MAGEL2, TRIM27 and USP7; directly interacts with USP7. Interacts with TRIM27. Interacts with VPS35; leading to recruitment at retromer-containing endosomes. Interacts with BMAL1 and PER2. As to expression, expressed in placenta, fetal and adult brain. Not detected in heart and small intestine, very low levels in fibroblasts. Not expressed in brain of a Prader-Willi patient.

The protein localises to the early endosome. The protein resides in the cytoplasm. Its subcellular location is the nucleus. Its function is as follows. Probably enhances ubiquitin ligase activity of RING-type zinc finger-containing E3 ubiquitin-protein ligases, possibly through recruitment and/or stabilization of the Ubl-conjugating enzyme (E2) at the E3:substrate complex. Acts as a regulator of retrograde transport via its interaction with VPS35. Recruited to retromer-containing endosomes and promotes the formation of 'Lys-63'-linked polyubiquitin chains at 'Lys-220' of WASHC1 together with TRIM27, leading to promote endosomal F-actin assembly. Regulates the circadian clock by repressing the transcriptional activator activity of the CLOCK-BMAL1 heterodimer. Significantly promotes the cytoplasmic accumulation of CLOCK. The chain is MAGE-like protein 2 (MAGEL2) from Homo sapiens (Human).